We begin with the raw amino-acid sequence, 218 residues long: Sodium channel regulatory subunit beta-1 (218 aa).

The first 18 residues, 1 to 18 (MGRLLAFVVGAALVSSAW), serve as a signal peptide directing secretion. Residues 19-157 (GGCVEVDSET…DKANRDMASI (139 aa)) lie on the Extracellular side of the membrane. 2 disulfides stabilise this stretch: Cys-21–Cys-43 and Cys-40–Cys-121. The 129-residue stretch at 22-150 (VEVDSETEAV…KIHLEVVDKA (129 aa)) folds into the Ig-like C2-type domain. N-linked (GlcNAc...) asparagine glycosylation is found at Asn-93, Asn-110, Asn-114, and Asn-135. Residues 158 to 179 (VSEIMMYVLIVVLTIWLVAEMV) traverse the membrane as a helical segment. Topologically, residues 180-218 (YCYKKIAAATEAAAQENASEYLAITSESKENCTGVQVAE) are cytoplasmic.

This sequence belongs to the sodium channel auxiliary subunit SCN1B (TC 8.A.17) family. In terms of assembly, a voltage-gated sodium (Nav) channel consists of an ion-conducting pore-forming alpha subunit functional on its own that is regulated by one or more beta subunits. Interacts with SCN1A; regulatory subunit of SCN1A/Nav1.1. Interacts with SCN3A; regulatory subunit of SCN3A/Nav1.3. Interacts with SCN4A; regulatory subunit of SCN4A/Nav1.4. Interacts with SCN5A; regulatory subunit of SCN5A/Nav1.5. Interacts with SCN8A; regulatory subunit of SCN8A/Nav1.6. Interacts with SCN9A; regulatory subunit of SCN9A/Nav1.7. Interacts with SCN10A; regulatory subunit of SCN10A/Nav1.8. Interacts with NFASC. Interacts with TMEM65.

The protein resides in the cell membrane. The protein localises to the perikaryon. Its subcellular location is the cell projection. It localises to the axon. Its function is as follows. Regulatory subunit of multiple voltage-gated sodium (Nav) channels directly mediating the depolarization of excitable membranes. Navs, also called VGSCs (voltage-gated sodium channels) or VDSCs (voltage-dependent sodium channels), operate by switching between closed and open conformations depending on the voltage difference across the membrane. In the open conformation they allow Na(+) ions to selectively pass through the pore, along their electrochemical gradient. The influx of Na+ ions provokes membrane depolarization, initiating the propagation of electrical signals throughout cells and tissues. The accessory beta subunits participate in localization and functional modulation of the Nav channels. Modulates the activity of SCN1A/Nav1.1, SCN2A/Nav1.2, SCN3A/Nav1.3, SCN4A/Nav1.4, SCN5A/Nav1.5, SCN8A/Nav1.6, SCN9A/Nav1.7 and SCN10A/Nav1.8. The sequence is that of Sodium channel regulatory subunit beta-1 from Oryctolagus cuniculus (Rabbit).